The chain runs to 264 residues: Chymotrypsin-like protease CTRL-1 (264 aa).

The signal sequence occupies residues 1–18 (MLLLSLTLSLVLLGSSWG). The propeptide at 19 to 33 (CGIPAIKPALSFSQR) is activation peptide. 5 cysteine pairs are disulfide-bonded: C19–C141, C60–C76, C155–C220, C187–C201, and C210–C239. One can recognise a Peptidase S1 domain in the interval 34–262 (IVNGENAVLG…FSTWINQVIA (229 aa)). The active-site Charge relay system is the H75. A glycan (N-linked (GlcNAc...) asparagine) is linked at N114. D121 (charge relay system) is an active-site residue. The active-site Charge relay system is the S214.

This sequence belongs to the peptidase S1 family.

The chain is Chymotrypsin-like protease CTRL-1 (CTRL) from Homo sapiens (Human).